Here is an 813-residue protein sequence, read N- to C-terminus: MAEKYNPQETEKKWQDKWAADRLYHASEDSPKPKWYSLTMFPYTSGNLHIGHWYAEVPADCFARYKRLRGFNVMRPVGFDSFGLPAENAAIKHNIHPRIWTLNNVENMRRQLKTIGAMFDWDREVITCLPEYYKWTQWFFLKLYEAGLAYRAKAPVNWCPSCQAVLANEQVVDGTCWRCETPTTRRDLEQWFFRITNYADELKDHEGLDWPEKITAMQRNWVGKSYGAEVSFALDCPTAFEKEIKVFTTRPDTIYGVTFMVLAPEHPLVEKITTPENKAAVDAYIKKSRTCTEIERLSTEREKDGVFTGTYVTNRVNGQKVPVWIGDYVLQSYGTGAVMGVPAHDERDFVFAQKYHLPVITVIAPSEYDGKPLEVAYINEGVMLNSGPFNGTPNTEGKEKVCDYLAEHGWGKKTVNYKLRDWLISRQRYWGAPIPMVYCEKCGIVPVPEKDLPVLLPEDVEFRSGGESPLKYNEGFVNTICPVCGGKAKRETDTMDTFMCSSWYFLRYTSPGYDKGPFDPVKLKYWMPVDLYTGGAEHAVMHLFYSRFFTKALRDMGIIDFGEPFKKLFNQGIIVSNHQKMSKSKGNVVTPDNLVAEVGTDAVRAYLMFVGPWDQGGEWNDSGLSGMSRWLNRVWNLFTEEYTPQTASAEAERELKRTLHQTIKKITMDIERLRFNTVVAALMELSNSLAKLKETAAISAENWQNTLQTFALMLAPVAPHIAEELWANLGMKYSIHNQNWPTWDEELAKDEVITLIIQVNGKLRERLEMPAGISEAEAKETALNSERVKPHLLGKTPVTVIYVPGKLVNIVVK.

Residues 42–52 (PYTSGNLHIGH) carry the 'HIGH' region motif. The 'KMSKS' region motif lies at 580–584 (KMSKS). Lys583 serves as a coordination point for ATP.

This sequence belongs to the class-I aminoacyl-tRNA synthetase family.

It is found in the cytoplasm. The enzyme catalyses tRNA(Leu) + L-leucine + ATP = L-leucyl-tRNA(Leu) + AMP + diphosphate. This is Leucine--tRNA ligase from Dehalococcoides mccartyi (strain CBDB1).